The chain runs to 63 residues: UPF0512 protein X (63 aa).

The protein belongs to the UPF0512 family.

The polypeptide is UPF0512 protein X (Dictyostelium discoideum (Social amoeba)).